The following is a 201-amino-acid chain: Recombination protein RecR (201 aa).

The C4-type zinc finger occupies 57–72 (CSDCRTFTEQDVCAIC). Residues 81–176 (GQICVVESPA…MASRIAHGVP (96 aa)) enclose the Toprim domain.

It belongs to the RecR family.

May play a role in DNA repair. It seems to be involved in an RecBC-independent recombinational process of DNA repair. It may act with RecF and RecO. This Pectobacterium carotovorum subsp. carotovorum (strain PC1) protein is Recombination protein RecR.